Here is a 209-residue protein sequence, read N- to C-terminus: Chaperone protein TorD (209 aa).

This sequence belongs to the TorD/DmsD family. TorD subfamily.

It localises to the cytoplasm. Functionally, involved in the biogenesis of TorA. Acts on TorA before the insertion of the molybdenum cofactor and, as a result, probably favors a conformation of the apoenzyme that is competent for acquiring the cofactor. The sequence is that of Chaperone protein TorD from Shewanella baltica (strain OS185).